The chain runs to 170 residues: APRG1 tumor suppressor candidate (170 aa).

The helical transmembrane segment at 150-170 (IALALAGPGAILILELSWFLG) threads the bilayer.

In terms of tissue distribution, expressed at high levels in the pancreas and placenta. Expressed at high levels in the kidney.

It is found in the membrane. This Homo sapiens (Human) protein is APRG1 tumor suppressor candidate.